The following is a 425-amino-acid chain: Adenylosuccinate synthetase (425 aa).

Residues 12–18 (GDEGKGK) and 40–42 (GHT) each bind GTP. Asp-13 serves as the catalytic Proton acceptor. Asp-13 and Gly-40 together coordinate Mg(2+). IMP-binding positions include 13–16 (DEGK), 38–41 (NAGH), Thr-130, Arg-144, Gln-224, Thr-239, and Arg-301. His-41 (proton donor) is an active-site residue. 297–303 (TVSNRRR) lines the substrate pocket. GTP is bound by residues Arg-303, 329–331 (KLD), and 411–413 (STS).

This sequence belongs to the adenylosuccinate synthetase family. In terms of assembly, homodimer. Mg(2+) is required as a cofactor.

It is found in the cytoplasm. The enzyme catalyses IMP + L-aspartate + GTP = N(6)-(1,2-dicarboxyethyl)-AMP + GDP + phosphate + 2 H(+). Its pathway is purine metabolism; AMP biosynthesis via de novo pathway; AMP from IMP: step 1/2. Functionally, plays an important role in the de novo pathway of purine nucleotide biosynthesis. Catalyzes the first committed step in the biosynthesis of AMP from IMP. In Wolbachia sp. subsp. Drosophila simulans (strain wRi), this protein is Adenylosuccinate synthetase.